Here is a 152-residue protein sequence, read N- to C-terminus: Large ribosomal subunit protein uL15 (152 aa).

Residues 1-57 (MTSTLNTLKSNSGSRKKKLRKGRGIAAGQGASCGFGMRGQKSRSGRPTRPGFEGGQM) form a disordered region. The segment covering 14 to 23 (SRKKKLRKGR) has biased composition (basic residues). The span at 25–37 (IAAGQGASCGFGM) shows a compositional bias: gly residues.

The protein belongs to the universal ribosomal protein uL15 family. In terms of assembly, part of the 50S ribosomal subunit.

Functionally, binds to the 23S rRNA. The chain is Large ribosomal subunit protein uL15 from Prochlorococcus marinus (strain MIT 9215).